Here is a 267-residue protein sequence, read N- to C-terminus: 4-hydroxy-tetrahydrodipicolinate reductase (267 aa).

Residues 9-14 (GAGGRM) and aspartate 35 each bind NAD(+). Residue arginine 36 coordinates NADP(+). NAD(+)-binding positions include 99 to 101 (GTT) and 123 to 126 (AANY). Histidine 156 functions as the Proton donor/acceptor in the catalytic mechanism. Residue histidine 157 coordinates (S)-2,3,4,5-tetrahydrodipicolinate. Lysine 160 (proton donor) is an active-site residue. Position 166 to 167 (166 to 167 (GT)) interacts with (S)-2,3,4,5-tetrahydrodipicolinate.

Belongs to the DapB family.

The protein resides in the cytoplasm. The catalysed reaction is (S)-2,3,4,5-tetrahydrodipicolinate + NAD(+) + H2O = (2S,4S)-4-hydroxy-2,3,4,5-tetrahydrodipicolinate + NADH + H(+). The enzyme catalyses (S)-2,3,4,5-tetrahydrodipicolinate + NADP(+) + H2O = (2S,4S)-4-hydroxy-2,3,4,5-tetrahydrodipicolinate + NADPH + H(+). It functions in the pathway amino-acid biosynthesis; L-lysine biosynthesis via DAP pathway; (S)-tetrahydrodipicolinate from L-aspartate: step 4/4. Its function is as follows. Catalyzes the conversion of 4-hydroxy-tetrahydrodipicolinate (HTPA) to tetrahydrodipicolinate. The chain is 4-hydroxy-tetrahydrodipicolinate reductase from Halorhodospira halophila (strain DSM 244 / SL1) (Ectothiorhodospira halophila (strain DSM 244 / SL1)).